Reading from the N-terminus, the 169-residue chain is Ribosome maturation factor RimM (169 aa).

The 73-residue stretch at 97-169 (EDEVYFKDLI…KIVVDWEYDY (73 aa)) folds into the PRC barrel domain.

It belongs to the RimM family. In terms of assembly, binds ribosomal protein uS19.

Its subcellular location is the cytoplasm. Functionally, an accessory protein needed during the final step in the assembly of 30S ribosomal subunit, possibly for assembly of the head region. Essential for efficient processing of 16S rRNA. May be needed both before and after RbfA during the maturation of 16S rRNA. It has affinity for free ribosomal 30S subunits but not for 70S ribosomes. The sequence is that of Ribosome maturation factor RimM from Francisella tularensis subsp. holarctica (strain FTNF002-00 / FTA).